Here is a 156-residue protein sequence, read N- to C-terminus: Terrestric acid biosynthesis cluster protein E (156 aa).

It participates in secondary metabolite biosynthesis. In terms of biological role, part of the tra gene cluster that produces terrestric acid. The clavatol biosynthesis cluster cla and the terrestric acid cluster tra are both involved in the production of peniphenones and penilactones. The non-reducing PKS claF is responsible for the formation of clavatol from successive condensations of 3 malonyl-CoA units, presumably with a simple acetyl-CoA starter unit, and 2 methylation steps. The esterase claE probably collaborates with claF by catalyzing the hydrolysis of ACP-bound acyl intermediates to free the ACP from stalled intermediates. The clavatol oxidase claD then converts clavatol to hydroxyclavatol. Spontaneous dehydration of hydroxyclavatol leads to the accumulation of the highly active ortho-quinone methide. On the other hand, the PKS-NRPS hybrid traA is involved in the formation of crustosic acid, with the help of traB and traD. The polyketide synthase module (PKS) of traA is responsible for the synthesis of the polyketide backbone via the condensation of an acetyl-CoA starter unit with 3 malonyl-CoA units. The downstream nonribosomal peptide synthetase (NRPS) module then amidates the carboxyl end of the polyketide with L-malic acid. Because traA lacks a designated enoylreductase (ER) domain, the required activity is provided the enoyl reductase traG. Crustosic acid undergoes decarboxylation and isomerization to the terrestric acid, catalyzed by the 2-oxoglutarate-dependent dioxygenase traH. Both acids are further converted to the 2 gamma-butyrolactones (R)-5-methyltetronic acid and (S)-5-carboxylmethyltetronic acid, with involvement of the cytochrome P450 monooxygenase claJ. Spontaneous addition of the methide to these gamma-butyrolactones leads to peniphenone D and penilactone D, which undergo again stereospecific attacking by methide to give penilactones A and B. TraE seems not to be involved in the biosynthesis of peniphenones and penilactones in the conditions used to study its function. This Penicillium crustosum (Blue mold fungus) protein is Terrestric acid biosynthesis cluster protein E.